We begin with the raw amino-acid sequence, 362 residues long: MPSTLQVLAKKVLALEHKENDHISREYYYHILKCCGLWWHEAPIILCFNGSKQMMIKTPIFEEGILLNTALMKAVQDNNYELIKLFTEWGANINYGLVSINTEHTRDLCRKLGAKEMLERNEVIQIIFKTLDDTTSSNMILCHELFTNNPLLENVNMGEMRMIIHWKMKNLTDLLLDNNSISEILTKFWYGIAVKYNLKDAIQYFYQRFINFNEWRVTCALSFNNVNDLHKMYITEKVHMNNDEMMNLACSIQDKNFSTIYYCFLLGANINQAMFTSVSNYNVFNIFFCIDLGADAFEEGKALAKQKGYNEIVEILSLDIIYSPNTDFLSKIKPEHISFLLKNFYPKNLYIFDRCKPGLYYP.

This sequence belongs to the asfivirus MGF 360 family.

In terms of biological role, plays a role in virus cell tropism, and may be required for efficient virus replication in macrophages. This chain is Protein MGF 360-18R, found in African swine fever virus (isolate Warthog/Namibia/Wart80/1980) (ASFV).